Reading from the N-terminus, the 277-residue chain is Hemin import ATP-binding protein HmuV (277 aa).

An ABC transporter domain is found at 25 to 260; sequence IHAQGLNLIL…DIIERVYGWP (236 aa). ATP is bound at residue 57 to 64; sequence GPNGAGKS.

It belongs to the ABC transporter superfamily. Heme (hemin) importer (TC 3.A.1.14.5) family. As to quaternary structure, the complex is composed of two ATP-binding proteins (HmuV), two transmembrane proteins (HmuU) and a solute-binding protein (HmuT).

It localises to the cell inner membrane. Its function is as follows. Part of the ABC transporter complex HmuTUV involved in hemin import. Responsible for energy coupling to the transport system. The chain is Hemin import ATP-binding protein HmuV from Photobacterium profundum (strain SS9).